We begin with the raw amino-acid sequence, 95 residues long: Aspartyl/glutamyl-tRNA(Asn/Gln) amidotransferase subunit C (95 aa).

It belongs to the GatC family. In terms of assembly, heterotrimer of A, B and C subunits.

It carries out the reaction L-glutamyl-tRNA(Gln) + L-glutamine + ATP + H2O = L-glutaminyl-tRNA(Gln) + L-glutamate + ADP + phosphate + H(+). The enzyme catalyses L-aspartyl-tRNA(Asn) + L-glutamine + ATP + H2O = L-asparaginyl-tRNA(Asn) + L-glutamate + ADP + phosphate + 2 H(+). Allows the formation of correctly charged Asn-tRNA(Asn) or Gln-tRNA(Gln) through the transamidation of misacylated Asp-tRNA(Asn) or Glu-tRNA(Gln) in organisms which lack either or both of asparaginyl-tRNA or glutaminyl-tRNA synthetases. The reaction takes place in the presence of glutamine and ATP through an activated phospho-Asp-tRNA(Asn) or phospho-Glu-tRNA(Gln). This chain is Aspartyl/glutamyl-tRNA(Asn/Gln) amidotransferase subunit C, found in Methylobacterium nodulans (strain LMG 21967 / CNCM I-2342 / ORS 2060).